We begin with the raw amino-acid sequence, 647 residues long: DNA mismatch repair protein MutL (647 aa).

It belongs to the DNA mismatch repair MutL/HexB family.

In terms of biological role, this protein is involved in the repair of mismatches in DNA. It is required for dam-dependent methyl-directed DNA mismatch repair. May act as a 'molecular matchmaker', a protein that promotes the formation of a stable complex between two or more DNA-binding proteins in an ATP-dependent manner without itself being part of a final effector complex. The chain is DNA mismatch repair protein MutL from Bacillus thuringiensis (strain Al Hakam).